The following is a 37-amino-acid chain: Large ribosomal subunit protein bL36c (37 aa).

It belongs to the bacterial ribosomal protein bL36 family.

The protein resides in the plastid. It is found in the chloroplast. This chain is Large ribosomal subunit protein bL36c, found in Lactuca sativa (Garden lettuce).